The primary structure comprises 54 residues: Large ribosomal subunit protein bL32c (54 aa).

The protein belongs to the bacterial ribosomal protein bL32 family.

The protein localises to the plastid. Its subcellular location is the chloroplast. The polypeptide is Large ribosomal subunit protein bL32c (Helianthus annuus (Common sunflower)).